A 346-amino-acid chain; its full sequence is Blue-light-activated histidine kinase 2 (346 aa).

A PAS domain is found at His8–Glu82. Cys55 carries the S-4a-FMN cysteine modification. In terms of domain architecture, PAC spans Glu79–Leu133. The region spanning Glu139–Gln334 is the Histidine kinase domain. His142 is subject to Phosphohistidine; by autocatalysis.

In terms of processing, FMN binds covalently to cysteine after exposure to blue light and this bond is spontaneously broken in the dark.

It catalyses the reaction ATP + protein L-histidine = ADP + protein N-phospho-L-histidine.. Its function is as follows. Photosensitive kinase that is involved in increased bacterial virulence upon exposure to light. The polypeptide is Blue-light-activated histidine kinase 2 (Erythrobacter litoralis (strain HTCC2594)).